Here is a 284-residue protein sequence, read N- to C-terminus: Formate channel FocA (284 aa).

Over 1–34 the chain is Cytoplasmic; sequence MASENQKLSSVALTPVEATDYAENTATYKANKRP. A helical transmembrane segment spans residues 35–55; the sequence is FLSFMSGISAGACIALAFVFY. Residues 56-72 lie on the Periplasmic side of the membrane; that stretch reads TTTQTASAGAPWGLTKL. The helical transmembrane segment at 73–93 threads the bilayer; that stretch reads VGGLVFSLGVIMVVILGSELF. At 94-116 the chain is on the cytoplasmic side; the sequence is TSSTLTLVARVGGRITTTQMIRN. The helical transmembrane segment at 117-137 threads the bilayer; it reads WIVVYLGNFVGGLFIAAVIWF. At 138-163 the chain is on the periplasmic side; that stretch reads SGQTMAANGQWGLTILATAQHKIHHT. Residues 164–184 traverse the membrane as a helical segment; it reads WFEAFNLGILCNIMVCVAVWM. Residues 185–194 lie on the Cytoplasmic side of the membrane; that stretch reads SYSGKTVTDK. Residues 195–215 traverse the membrane as a helical segment; the sequence is AFIMIMPIGLFVASGFEHCVA. The Periplasmic segment spans residues 216–252; that stretch reads NMFMIPMGIITAHFSTPEFWQQIGVDPMKYADLDLYH. A helical membrane pass occupies residues 253-273; it reads FIVKNLIPVTLGNIVGGAICI. Residues 274-284 lie on the Cytoplasmic side of the membrane; sequence GVFQRYLTKTH.

It belongs to the FNT transporter (TC 1.A.16) family. As to quaternary structure, homopentamer.

It localises to the cell inner membrane. It carries out the reaction formate(in) = formate(out). In terms of biological role, involved in the bidirectional transport of formate during mixed-acid fermentation. Functions to maintain relatively constant intracellular formate levels during growth, using different mechanisms for efflux and uptake of the anion. The chain is Formate channel FocA (focA) from Haemophilus influenzae (strain ATCC 51907 / DSM 11121 / KW20 / Rd).